A 488-amino-acid chain; its full sequence is B-type flagellin (488 aa).

This sequence belongs to the bacterial flagellin family. Post-translationally, phosphorylated on tyrosine residue(s).

The protein resides in the secreted. It localises to the bacterial flagellum. Functionally, flagellin is the subunit protein which polymerizes to form the filaments of bacterial flagella. This is B-type flagellin (fliC) from Pseudomonas aeruginosa (strain ATCC 15692 / DSM 22644 / CIP 104116 / JCM 14847 / LMG 12228 / 1C / PRS 101 / PAO1).